The chain runs to 208 residues: UPF0316 protein SERP1448 (208 aa).

3 helical membrane passes run 8-28, 40-60, and 66-86; these read PWLMVLAIFIINVCYVTFLTM, VAAVVSFMEVLVYVVGLGLVM, and IQNIFAYALGFSVGIIVGMKI.

It belongs to the UPF0316 family.

It localises to the cell membrane. The protein is UPF0316 protein SERP1448 of Staphylococcus epidermidis (strain ATCC 35984 / DSM 28319 / BCRC 17069 / CCUG 31568 / BM 3577 / RP62A).